The primary structure comprises 485 residues: tRNA sulfurtransferase (485 aa).

One can recognise a THUMP domain in the interval 63–167 (DKLVERLSCM…NELLYLVTAI (105 aa)). Residues 185-186 (LI), lysine 267, glycine 289, and glutamine 298 contribute to the ATP site. An intrachain disulfide couples cysteine 346 to cysteine 458. In terms of domain architecture, Rhodanese spans 406–485 (LAENEVILDI…FNNIKVYRQN (80 aa)). Catalysis depends on cysteine 458, which acts as the Cysteine persulfide intermediate.

The protein belongs to the ThiI family.

The protein resides in the cytoplasm. The enzyme catalyses [ThiI sulfur-carrier protein]-S-sulfanyl-L-cysteine + a uridine in tRNA + 2 reduced [2Fe-2S]-[ferredoxin] + ATP + H(+) = [ThiI sulfur-carrier protein]-L-cysteine + a 4-thiouridine in tRNA + 2 oxidized [2Fe-2S]-[ferredoxin] + AMP + diphosphate. It carries out the reaction [ThiS sulfur-carrier protein]-C-terminal Gly-Gly-AMP + S-sulfanyl-L-cysteinyl-[cysteine desulfurase] + AH2 = [ThiS sulfur-carrier protein]-C-terminal-Gly-aminoethanethioate + L-cysteinyl-[cysteine desulfurase] + A + AMP + 2 H(+). Its pathway is cofactor biosynthesis; thiamine diphosphate biosynthesis. In terms of biological role, catalyzes the ATP-dependent transfer of a sulfur to tRNA to produce 4-thiouridine in position 8 of tRNAs, which functions as a near-UV photosensor. Also catalyzes the transfer of sulfur to the sulfur carrier protein ThiS, forming ThiS-thiocarboxylate. This is a step in the synthesis of thiazole, in the thiamine biosynthesis pathway. The sulfur is donated as persulfide by IscS. This is tRNA sulfurtransferase from Tolumonas auensis (strain DSM 9187 / NBRC 110442 / TA 4).